We begin with the raw amino-acid sequence, 611 residues long: Probable potassium transport system protein Kup (611 aa).

The next 13 helical transmembrane spans lie at Leu-24–Leu-44, Val-55–Met-75, Val-102–Ile-122, Leu-143–Phe-163, Phe-175–Ala-195, Leu-218–Phe-238, Ala-252–Leu-272, Thr-275–Pro-295, Phe-296–Phe-316, Ile-344–Phe-364, Tyr-374–Leu-394, Leu-400–Val-420, and Ile-423–Ile-443.

The protein belongs to the HAK/KUP transporter (TC 2.A.72) family.

Its subcellular location is the cell membrane. The enzyme catalyses K(+)(in) + H(+)(in) = K(+)(out) + H(+)(out). Transport of potassium into the cell. Likely operates as a K(+):H(+) symporter. This chain is Probable potassium transport system protein Kup, found in Methanospirillum hungatei JF-1 (strain ATCC 27890 / DSM 864 / NBRC 100397 / JF-1).